Reading from the N-terminus, the 379-residue chain is Lipoyl synthase, mitochondrial (379 aa).

Cys-94, Cys-99, Cys-105, Cys-126, Cys-130, Cys-133, and Ser-342 together coordinate [4Fe-4S] cluster. A Radical SAM core domain is found at 109–331 (GEDNGAATAT…EKEAMSMGFL (223 aa)).

This sequence belongs to the radical SAM superfamily. Lipoyl synthase family. [4Fe-4S] cluster serves as cofactor.

The protein resides in the mitochondrion. The catalysed reaction is [[Fe-S] cluster scaffold protein carrying a second [4Fe-4S](2+) cluster] + N(6)-octanoyl-L-lysyl-[protein] + 2 oxidized [2Fe-2S]-[ferredoxin] + 2 S-adenosyl-L-methionine + 4 H(+) = [[Fe-S] cluster scaffold protein] + N(6)-[(R)-dihydrolipoyl]-L-lysyl-[protein] + 4 Fe(3+) + 2 hydrogen sulfide + 2 5'-deoxyadenosine + 2 L-methionine + 2 reduced [2Fe-2S]-[ferredoxin]. It functions in the pathway protein modification; protein lipoylation via endogenous pathway; protein N(6)-(lipoyl)lysine from octanoyl-[acyl-carrier-protein]: step 2/2. Functionally, catalyzes the radical-mediated insertion of two sulfur atoms into the C-6 and C-8 positions of the octanoyl moiety bound to the lipoyl domains of lipoate-dependent enzymes, thereby converting the octanoylated domains into lipoylated derivatives. The polypeptide is Lipoyl synthase, mitochondrial (Leishmania braziliensis).